A 417-amino-acid polypeptide reads, in one-letter code: MLKRDMTIAGYDPELWQAITDETRRQEEHIELIASENYTSPRVMEAQGSQLTNKYAEGYPSKRYYGGCEYVDVVETLAIERAKELFGATYANVQPHSGSQANSAVYMALLQPGDTVLGMNLAHGGHLTHGSPVNFSGKLYNIIPYGIDESGKIDYDDMERQAVEHKPKMMIGGFSAYSGIVDWARMREIADKVGAWLFVDMAHVAGLIAAGVYPNPVPHAHVVTSTTHKTLAGPRGGLILSAADDEELYKKLNSAVFPGGQGGPLMHVIAGKAVAFKEALEPEFKTYQAQVVKNAKAMAATFIERGYKIVSGGTDNHLMLVDLIGRELTGKEADAALGKANITVNKNSVPNDPRSPFVTSGVRIGTPAITRRGFKEAESIQLTNWICDVLDNHDNDAVLATVREQVLDICRRFPVYA.

(6S)-5,6,7,8-tetrahydrofolate-binding positions include L121 and 125-127 (GHL). K229 is modified (N6-(pyridoxal phosphate)lysine). 355-357 (SPF) contributes to the (6S)-5,6,7,8-tetrahydrofolate binding site.

Belongs to the SHMT family. Homodimer. Pyridoxal 5'-phosphate is required as a cofactor.

It localises to the cytoplasm. It catalyses the reaction (6R)-5,10-methylene-5,6,7,8-tetrahydrofolate + glycine + H2O = (6S)-5,6,7,8-tetrahydrofolate + L-serine. The protein operates within one-carbon metabolism; tetrahydrofolate interconversion. Its pathway is amino-acid biosynthesis; glycine biosynthesis; glycine from L-serine: step 1/1. Functionally, catalyzes the reversible interconversion of serine and glycine with tetrahydrofolate (THF) serving as the one-carbon carrier. This reaction serves as the major source of one-carbon groups required for the biosynthesis of purines, thymidylate, methionine, and other important biomolecules. Also exhibits THF-independent aldolase activity toward beta-hydroxyamino acids, producing glycine and aldehydes, via a retro-aldol mechanism. In Aeromonas hydrophila subsp. hydrophila (strain ATCC 7966 / DSM 30187 / BCRC 13018 / CCUG 14551 / JCM 1027 / KCTC 2358 / NCIMB 9240 / NCTC 8049), this protein is Serine hydroxymethyltransferase.